A 332-amino-acid chain; its full sequence is 3-ketodihydrosphingosine reductase (332 aa).

A signal peptide spans methionine 1–proline 25. The Cytoplasmic segment spans residues lysine 26–serine 269. The NADPH site is built by glycine 39, serine 41, serine 42, glycine 43, arginine 64, lysine 68, and aspartate 93. The GXSXG signature appears at glycine 39–glycine 43. Serine 172 acts as the Proton donor in catalysis. The active-site Proton acceptor is tyrosine 186. Positions 186 and 190 each coordinate NADP(+). Lysine 190 (lowers pKa of active site Tyr) is an active-site residue. Residues aspartate 270–glycine 290 traverse the membrane as a helical segment. Residues leucine 291–glutamine 292 are Lumenal-facing. A helical membrane pass occupies residues glutamine 293 to serine 313. The Cytoplasmic segment spans residues isoleucine 314–threonine 331.

This sequence belongs to the short-chain dehydrogenases/reductases (SDR) family.

The protein localises to the endoplasmic reticulum membrane. It catalyses the reaction sphinganine + NADP(+) = 3-oxosphinganine + NADPH + H(+). The protein operates within lipid metabolism; sphingolipid metabolism. Functionally, catalyzes the reduction of 3'-oxosphinganine (3-ketodihydrosphingosine/KDS) to sphinganine (dihydrosphingosine/DHS), the second step of de novo sphingolipid biosynthesis. This Bos taurus (Bovine) protein is 3-ketodihydrosphingosine reductase (KDSR).